Here is a 1633-residue protein sequence, read N- to C-terminus: Laminin-like protein lam-2 (1633 aa).

Positions 1 to 19 (MTSILWLFSLAVLWHMGQP) are cleaved as a signal peptide. One can recognise a Laminin N-terminal domain in the interval 47 to 286 (QPQRCVPDFV…AISDFAVGGR (240 aa)). 2 N-linked (GlcNAc...) asparagine glycosylation sites follow: Asn-116 and Asn-136. 16 disulfide bridges follow: Cys-287–Cys-296, Cys-289–Cys-310, Cys-312–Cys-321, Cys-324–Cys-344, Cys-347–Cys-356, Cys-349–Cys-372, Cys-375–Cys-384, Cys-387–Cys-400, Cys-403–Cys-415, Cys-405–Cys-421, Cys-423–Cys-432, Cys-435–Cys-447, Cys-450–Cys-464, Cys-452–Cys-471, Cys-473–Cys-482, and Cys-485–Cys-500. 4 consecutive Laminin EGF-like domains span residues 287 to 346 (CKCN…ECIA), 347 to 402 (CNCS…YCVA), 403 to 449 (CGCN…GCKN), and 450 to 502 (CGCE…GCTP). An N-linked (GlcNAc...) asparagine glycan is attached at Asn-348. The region spanning 503 to 512 (CFCFGHSSIC) is the Laminin EGF-like 5; first part domain. Asn-522, Asn-658, and Asn-740 each carry an N-linked (GlcNAc...) asparagine glycan. A Laminin IV type A domain is found at 529–701 (QDKQKWAGQN…NPKQATWIEH (173 aa)). The 46-residue stretch at 702 to 747 (CECLPGFVGQFCESCESGFRRETKFGGPFNHCIKCDCHNHSNSCEA) folds into the Laminin EGF-like 5; second part domain. 23 cysteine pairs are disulfide-bonded: Cys-736–Cys-745, Cys-738–Cys-752, Cys-754–Cys-763, Cys-766–Cys-782, Cys-785–Cys-803, Cys-806–Cys-815, Cys-818–Cys-832, Cys-835–Cys-849, Cys-837–Cys-856, Cys-859–Cys-868, Cys-871–Cys-887, Cys-890–Cys-909, Cys-892–Cys-916, Cys-918–Cys-927, Cys-930–Cys-943, Cys-946–Cys-958, Cys-948–Cys-965, Cys-967–Cys-976, Cys-979–Cys-991, Cys-994–Cys-1006, Cys-996–Cys-1013, Cys-1015–Cys-1024, and Cys-1027–Cys-1038. The region spanning 752-784 (CICEHNTAGDTCERCARGYYGDALQGTEEDCQK) is the Laminin EGF-like 6; truncated domain. Laminin EGF-like domains follow at residues 785 to 834 (CPCP…ECVE), 835 to 889 (CACS…NCQS), 890 to 945 (CGCF…GCQE), 946 to 993 (CNCD…GCQP), and 994 to 1040 (CDCE…GCLP). Asn-936 is a glycosylation site (N-linked (GlcNAc...) asparagine). 7 N-linked (GlcNAc...) asparagine glycosylation sites follow: Asn-1077, Asn-1183, Asn-1226, Asn-1259, Asn-1336, Asn-1452, and Asn-1528.

Its function is as follows. During the formation of neuromuscular junctions at the larval stage, negatively regulates membrane protrusion from body wall muscles, probably downstream of the integrin complex formed by pat-2 and pat-3. The protein is Laminin-like protein lam-2 (lam-2) of Caenorhabditis elegans.